A 264-amino-acid chain; its full sequence is Tetraspanin-12 (264 aa).

The Cytoplasmic segment spans residues 1–13 (MLRLSNAAVITTN). A helical membrane pass occupies residues 14-34 (AILALIGLAALSFSVYVYVQG). Over 35–45 (PSQCQRFVQNP) the chain is Extracellular. The helical transmembrane segment at 46-66 (LIVTAALLFFISSLGLIAALY) threads the bilayer. Residues 67 to 75 (GSHIIITLY) lie on the Cytoplasmic side of the membrane. The helical transmembrane segment at 76 to 96 (LFFLFLSILLLLVLSVFIFLV) threads the bilayer. Residues 97 to 228 (TNPTAGKALS…VLKGIRKRWR (132 aa)) lie on the Extracellular side of the membrane. N-linked (GlcNAc...) asparagine glycosylation occurs at asparagine 180. Residues 229 to 249 (ILIVVNLLLILLVVFLYSCGC) traverse the membrane as a helical segment. The Cytoplasmic portion of the chain corresponds to 250-264 (CVRKNNRVPWKRRFF).

This sequence belongs to the tetraspanin (TM4SF) family.

The protein resides in the membrane. Functionally, may be involved in the regulation of cell differentiation. The sequence is that of Tetraspanin-12 (TET12) from Arabidopsis thaliana (Mouse-ear cress).